Reading from the N-terminus, the 79-residue chain is RNA-binding protein KhpA (79 aa).

The 48-residue stretch at 32–79 (TVVIELRVDPAELGKVIGKQGRIARALRTILTAIGRKIGKRVVLEILE) folds into the KH domain.

It belongs to the KhpA RNA-binding protein family.

It is found in the cytoplasm. Functionally, a probable RNA-binding protein. The protein is RNA-binding protein KhpA of Aquifex aeolicus (strain VF5).